The chain runs to 83 residues: Cell division topological specificity factor (83 aa).

Belongs to the MinE family.

Functionally, prevents the cell division inhibition by proteins MinC and MinD at internal division sites while permitting inhibition at polar sites. This ensures cell division at the proper site by restricting the formation of a division septum at the midpoint of the long axis of the cell. In Deinococcus deserti (strain DSM 17065 / CIP 109153 / LMG 22923 / VCD115), this protein is Cell division topological specificity factor.